The following is a 64-amino-acid chain: Large ribosomal subunit protein bL35 (64 aa).

It belongs to the bacterial ribosomal protein bL35 family.

The sequence is that of Large ribosomal subunit protein bL35 from Alcanivorax borkumensis (strain ATCC 700651 / DSM 11573 / NCIMB 13689 / SK2).